The following is a 60-amino-acid chain: Large ribosomal subunit protein bL32 (60 aa).

The span at 1-16 (MAVPRRKTSPSRRGMR) shows a compositional bias: basic residues. The disordered stretch occupies residues 1-60 (MAVPRRKTSPSRRGMRRSADALKRPTYAEDKDSGELRRPHHLDLKTGMYKGRQVIKKKDA). Residues 17–44 (RSADALKRPTYAEDKDSGELRRPHHLDL) are compositionally biased toward basic and acidic residues.

This sequence belongs to the bacterial ribosomal protein bL32 family.

The chain is Large ribosomal subunit protein bL32 from Rhodopseudomonas palustris (strain BisB5).